The chain runs to 375 residues: 23S rRNA (uracil(747)-C(5))-methyltransferase RlmC (375 aa).

Residues Cys3, Cys11, Cys14, and Cys87 each contribute to the [4Fe-4S] cluster site. S-adenosyl-L-methionine is bound by residues Gln212, Phe241, Glu262, and Asn307. Cys334 functions as the Nucleophile in the catalytic mechanism.

It belongs to the class I-like SAM-binding methyltransferase superfamily. RNA M5U methyltransferase family. RlmC subfamily.

The catalysed reaction is uridine(747) in 23S rRNA + S-adenosyl-L-methionine = 5-methyluridine(747) in 23S rRNA + S-adenosyl-L-homocysteine + H(+). Its function is as follows. Catalyzes the formation of 5-methyl-uridine at position 747 (m5U747) in 23S rRNA. The sequence is that of 23S rRNA (uracil(747)-C(5))-methyltransferase RlmC from Salmonella paratyphi A (strain ATCC 9150 / SARB42).